The following is a 229-amino-acid chain: NAD(P)H-hydrate epimerase (229 aa).

The 208-residue stretch at 10–217 (AINVDLELFN…ALQRKYELNL (208 aa)) folds into the YjeF N-terminal domain. (6S)-NADPHX is bound at residue 60-64 (NNGGD). The K(+) site is built by Asn61 and Asp125. Residues 129 to 135 (GFSFKPP) and Asp158 contribute to the (6S)-NADPHX site. Ser161 contacts K(+).

It belongs to the NnrE/AIBP family. The cofactor is K(+).

It catalyses the reaction (6R)-NADHX = (6S)-NADHX. It carries out the reaction (6R)-NADPHX = (6S)-NADPHX. Catalyzes the epimerization of the S- and R-forms of NAD(P)HX, a damaged form of NAD(P)H that is a result of enzymatic or heat-dependent hydration. This is a prerequisite for the S-specific NAD(P)H-hydrate dehydratase to allow the repair of both epimers of NAD(P)HX. This is NAD(P)H-hydrate epimerase from Drosophila mojavensis (Fruit fly).